Here is a 259-residue protein sequence, read N- to C-terminus: Ubiquitin-conjugating enzyme E2 J2 (259 aa).

The Cytoplasmic segment spans residues Met-1–His-226. The UBC core domain maps to Thr-12–Glu-162. Cys-94 (glycyl thioester intermediate) is an active-site residue. The helical; Anchor for type IV membrane protein transmembrane segment at Gly-227 to Tyr-247 threads the bilayer. The Lumenal portion of the chain corresponds to Thr-248–Glu-259.

The protein belongs to the ubiquitin-conjugating enzyme family. Interacts with murid herpesvirus 4 protein K3 (mK3).

The protein localises to the endoplasmic reticulum membrane. It catalyses the reaction S-ubiquitinyl-[E1 ubiquitin-activating enzyme]-L-cysteine + [E2 ubiquitin-conjugating enzyme]-L-cysteine = [E1 ubiquitin-activating enzyme]-L-cysteine + S-ubiquitinyl-[E2 ubiquitin-conjugating enzyme]-L-cysteine.. The protein operates within protein modification; protein ubiquitination. Catalyzes the covalent attachment of ubiquitin to other proteins. Seems to function in the selective degradation of misfolded membrane proteins from the endoplasmic reticulum (ERAD). In cooperation with the GATOR2 complex, catalyzes 'Lys-6'-linked ubiquitination of NPRL2. Functionally, in case of infection by the murid herpesvirus 4, its association with the viral E3 ligase K3 mediates ubiquitination of host surface class I (MHC-I) H-2D(b)/H2-D1 and H-2K(b)/H2-K1 molecules before they exit the endoplasmic reticulum, leading to their degradation by the ERAD system, thus blocking the immune detection of virus-infected cells. The complex formed with the murid herpesvirus 4 protein K3 mediates ubiquitination of lysine, as well as serine and threonine residues present in the cytoplasmic tail of surface class I molecules and promotes ubiquitination of hydroxylated serine or threonine residues via ester bonds instead of the classical isopeptide linkage. This Mus musculus (Mouse) protein is Ubiquitin-conjugating enzyme E2 J2 (Ube2j2).